The primary structure comprises 163 residues: Nucleotide-binding protein MAP_4063c (163 aa).

This sequence belongs to the YajQ family.

In terms of biological role, nucleotide-binding protein. The polypeptide is Nucleotide-binding protein MAP_4063c (Mycolicibacterium paratuberculosis (strain ATCC BAA-968 / K-10) (Mycobacterium paratuberculosis)).